Reading from the N-terminus, the 639-residue chain is UvrABC system protein C (639 aa).

The 78-residue stretch at 20–97 folds into the GIY-YIG domain; that stretch reads ERSGVYRMFD…IKKFQPKFNI (78 aa). Residues 207 to 242 enclose the UVR domain; that stretch reads KELQENLSRKMEELSSQMRFEEAAEIRDRIKALSYV.

It belongs to the UvrC family. As to quaternary structure, interacts with UvrB in an incision complex.

It localises to the cytoplasm. Its function is as follows. The UvrABC repair system catalyzes the recognition and processing of DNA lesions. UvrC both incises the 5' and 3' sides of the lesion. The N-terminal half is responsible for the 3' incision and the C-terminal half is responsible for the 5' incision. The protein is UvrABC system protein C of Rickettsia conorii (strain ATCC VR-613 / Malish 7).